Here is a 244-residue protein sequence, read N- to C-terminus: Phosphoadenosine 5'-phosphosulfate reductase (244 aa).

The active-site Nucleophile; cysteine thiosulfonate intermediate is C239.

It belongs to the PAPS reductase family. CysH subfamily.

Its subcellular location is the cytoplasm. The catalysed reaction is [thioredoxin]-disulfide + sulfite + adenosine 3',5'-bisphosphate + 2 H(+) = [thioredoxin]-dithiol + 3'-phosphoadenylyl sulfate. It participates in sulfur metabolism; hydrogen sulfide biosynthesis; sulfite from sulfate: step 3/3. Catalyzes the formation of sulfite from phosphoadenosine 5'-phosphosulfate (PAPS) using thioredoxin as an electron donor. This is Phosphoadenosine 5'-phosphosulfate reductase from Shigella flexneri.